The chain runs to 393 residues: Erythronate-4-phosphate dehydrogenase (393 aa).

Substrate contacts are provided by serine 57 and threonine 79. Residue aspartate 159 participates in NAD(+) binding. Residue arginine 229 is part of the active site. Aspartate 253 lines the NAD(+) pocket. Glutamate 258 is an active-site residue. Histidine 275 acts as the Proton donor in catalysis. Glycine 278 is an NAD(+) binding site. A substrate-binding site is contributed by tyrosine 279.

The protein belongs to the D-isomer specific 2-hydroxyacid dehydrogenase family. PdxB subfamily. As to quaternary structure, homodimer.

The protein localises to the cytoplasm. The catalysed reaction is 4-phospho-D-erythronate + NAD(+) = (R)-3-hydroxy-2-oxo-4-phosphooxybutanoate + NADH + H(+). Its pathway is cofactor biosynthesis; pyridoxine 5'-phosphate biosynthesis; pyridoxine 5'-phosphate from D-erythrose 4-phosphate: step 2/5. In terms of biological role, catalyzes the oxidation of erythronate-4-phosphate to 3-hydroxy-2-oxo-4-phosphonooxybutanoate. This Colwellia psychrerythraea (strain 34H / ATCC BAA-681) (Vibrio psychroerythus) protein is Erythronate-4-phosphate dehydrogenase.